A 340-amino-acid polypeptide reads, in one-letter code: GTPase Obg (340 aa).

Residues 1 to 159 (MKFLDQAKVY…RTLWLRLKLI (159 aa)) enclose the Obg domain. Residues 160 to 327 (ADAGIIGLPN…LLRAGAHIIE (168 aa)) enclose the OBG-type G domain. GTP-binding positions include 166–173 (GLPNAGKS), 191–195 (FTTLY), 212–215 (DIPG), 279–282 (SQID), and 308–310 (SAV). Residues Ser-173 and Thr-193 each coordinate Mg(2+).

It belongs to the TRAFAC class OBG-HflX-like GTPase superfamily. OBG GTPase family. In terms of assembly, monomer. The cofactor is Mg(2+).

Its subcellular location is the cytoplasm. Functionally, an essential GTPase which binds GTP, GDP and possibly (p)ppGpp with moderate affinity, with high nucleotide exchange rates and a fairly low GTP hydrolysis rate. Plays a role in control of the cell cycle, stress response, ribosome biogenesis and in those bacteria that undergo differentiation, in morphogenesis control. This chain is GTPase Obg, found in Bartonella henselae (strain ATCC 49882 / DSM 28221 / CCUG 30454 / Houston 1) (Rochalimaea henselae).